The primary structure comprises 197 residues: Dephospho-CoA kinase (197 aa).

One can recognise a DPCK domain in the interval 4–197 (LIGLTGGIAT…VLKWLKTITK (194 aa)). 12–17 (ATGKST) serves as a coordination point for ATP.

It belongs to the CoaE family.

It is found in the cytoplasm. The enzyme catalyses 3'-dephospho-CoA + ATP = ADP + CoA + H(+). It participates in cofactor biosynthesis; coenzyme A biosynthesis; CoA from (R)-pantothenate: step 5/5. Functionally, catalyzes the phosphorylation of the 3'-hydroxyl group of dephosphocoenzyme A to form coenzyme A. The chain is Dephospho-CoA kinase from Lactiplantibacillus plantarum (strain ATCC BAA-793 / NCIMB 8826 / WCFS1) (Lactobacillus plantarum).